We begin with the raw amino-acid sequence, 475 residues long: Argininosuccinate lyase (475 aa).

The protein belongs to the lyase 1 family. Argininosuccinate lyase subfamily.

It localises to the cytoplasm. It carries out the reaction 2-(N(omega)-L-arginino)succinate = fumarate + L-arginine. It participates in amino-acid biosynthesis; L-arginine biosynthesis; L-arginine from L-ornithine and carbamoyl phosphate: step 3/3. The sequence is that of Argininosuccinate lyase from Leifsonia xyli subsp. xyli (strain CTCB07).